We begin with the raw amino-acid sequence, 324 residues long: DNA repair and recombination protein RadA (324 aa).

Position 114-121 (114-121 (GEFGSGKT)) interacts with ATP.

Belongs to the eukaryotic RecA-like protein family.

Involved in DNA repair and in homologous recombination. Binds and assemble on single-stranded DNA to form a nucleoprotein filament. Hydrolyzes ATP in a ssDNA-dependent manner and promotes DNA strand exchange between homologous DNA molecules. The sequence is that of DNA repair and recombination protein RadA from Metallosphaera sedula (strain ATCC 51363 / DSM 5348 / JCM 9185 / NBRC 15509 / TH2).